An 831-amino-acid polypeptide reads, in one-letter code: Prickle-like protein 1 (831 aa).

A PET domain is found at 14 to 122 (FGCQRSSTSD…TIKLLSRAMM (109 aa)). 3 consecutive LIM zinc-binding domains span residues 124–189 (AVCE…LLKP), 189–249 (PRCS…LYAE), and 249–313 (EYCE…EDIH). The disordered stretch occupies residues 314–346 (ASDSSDSAFQSARSRDSRRSVRMGRSSRSADQC). Ser315, Ser591, and Ser594 each carry phosphoserine. Disordered stretches follow at residues 664 to 688 (EERG…NALN) and 763 to 831 (CSSS…CIIS). The span at 669–680 (RPHHHRHRRSRK) shows a compositional bias: basic residues. At Ser683 the chain carries Phosphoserine. Positions 797 to 812 (DLSSPASALPTPQFNQ) are enriched in polar residues. Residues 815–831 (TKSKKKKGHRGKNCIIS) show a composition bias toward basic residues. Residue Cys828 is modified to Cysteine methyl ester. Cys828 carries S-farnesyl cysteine lipidation. A propeptide spans 829-831 (IIS) (removed in mature form).

Belongs to the prickle / espinas / testin family. In terms of assembly, interacts with REST.

Its subcellular location is the nucleus membrane. It localises to the cytoplasm. It is found in the cytosol. Functionally, involved in the planar cell polarity pathway that controls convergent extension during gastrulation and neural tube closure. Convergent extension is a complex morphogenetic process during which cells elongate, move mediolaterally, and intercalate between neighboring cells, leading to convergence toward the mediolateral axis and extension along the anteroposterior axis. Necessary for nuclear localization of REST. May serve as nuclear receptor. The sequence is that of Prickle-like protein 1 (Prickle1) from Rattus norvegicus (Rat).